We begin with the raw amino-acid sequence, 346 residues long: Putative glycosyltransferase HI_0523 (346 aa).

The protein belongs to the glycosyltransferase 9 family.

The protein is Putative glycosyltransferase HI_0523 of Haemophilus influenzae (strain ATCC 51907 / DSM 11121 / KW20 / Rd).